The following is a 172-amino-acid chain: MATSTERAVLAGGCFWGMQDLIRRYPGVISTRVGYSGGDVANATYRNHGTHAEAIEINFDPAVISYRTLLERFFQIHDPTTRNRQGNDVGMSYRSAIYYTSDEQKRVAEDTIADVDASGLWPGKVVTEVAPAGAFWEAEPEHQDYLEKYPNGYTCHFVRPGWKLPVREKAVS.

Residue Cys-14 is part of the active site.

The protein belongs to the MsrA Met sulfoxide reductase family.

The catalysed reaction is L-methionyl-[protein] + [thioredoxin]-disulfide + H2O = L-methionyl-(S)-S-oxide-[protein] + [thioredoxin]-dithiol. It catalyses the reaction [thioredoxin]-disulfide + L-methionine + H2O = L-methionine (S)-S-oxide + [thioredoxin]-dithiol. In terms of biological role, has an important function as a repair enzyme for proteins that have been inactivated by oxidation. Catalyzes the reversible oxidation-reduction of methionine sulfoxide in proteins to methionine. This is Peptide methionine sulfoxide reductase MsrA 1 (msrA1) from Mesorhizobium japonicum (strain LMG 29417 / CECT 9101 / MAFF 303099) (Mesorhizobium loti (strain MAFF 303099)).